The chain runs to 847 residues: MHLLGPWLLLLVLEYLAFSDSSKWAFEHPETLYAWEGACVWIPCTYRALDRDLESFILFHNPEYNKNTSKFDGTRLYESTKDGKVPSEQKRVQFLGDKNKNCTLSIHPVHVNDSGQLGLRMESKTAKWMERIHLNVSERPFPPHIQLPPEIQESQEVTLTCLLNFSCYGYPIQLQWLLEGVPMRQAAVTSTSLTIKSVFTRSELKFSPQWSHHGKIVTCQLQDADGKFLSNDTVQLNVKHTPKLEIKVTPSDAIVREGESVTMTCEVSSSNPEYTTISWLKDGTSLKKQNTLMLNLHEVTKDQSGKYCCQVSNDVGPGRSAEVFLQVQYAPEPSTVQILHSPAVEGSQVEFLCMSLANPLPTNYTWYHNGKEMQGRTEEKVHIPKILPWHAGTYSCVAENILGTGQRGPGAELDVQYPPKKVTTVIQNPTPIREGDTVTLSCNYNSSNPSVTRYEWKPHGAWEEPSLGVLKIQNVGWGNTTIACAACNSWCSWASPVALNVQYAPRDVRVRKIKPLSEIHSGNSVSLQCDFSSSHPKEVQFFWEKNGRLLGKESRLNFDSISPEDAGSYSCWVNNSIGQTASKAWTLEVLYAPRRLRVSMSPGDQVMEGKSATLTCESDANPPVSHYTWFDWNNQSLPYHSQKLRLEPVKVQHSGAYWCQGTNSVGKGHSPLSTLTVYYSPETIGRRVAVGFGSCLAILILAICGLKLQRRWKRTQSQQGLQENSSGQSFFVRNKKVRRAPLSEGPHSLGYYNPMMEDGISYTTLRFPETNIPRTGDAETSEMQSPPPDCDDTVTYSVLHKRQMGDYENVIPDFSEDEGIHYSELIQFGVGERPQAQENVDYVILKH.

The signal sequence occupies residues 1-19 (MHLLGPWLLLLVLEYLAFS). The region spanning 20–138 (DSSKWAFEHP…MERIHLNVSE (119 aa)) is the Ig-like V-type domain. Residues 20–687 (DSSKWAFEHP…YYSPETIGRR (668 aa)) lie on the Extracellular side of the membrane. Residues Asn-67, Asn-101, and Asn-112 are each glycosylated (N-linked (GlcNAc...) asparagine). Arg-120 is an N-acetylneuraminate binding site. Asn-135, Asn-164, and Asn-231 each carry an N-linked (GlcNAc...) asparagine glycan. 6 Ig-like C2-type domains span residues 143 to 235 (PHIQ…DTVQ), 242 to 326 (PKLE…VFLQ), 331 to 416 (PEPS…LDVQ), 419 to 500 (PKKV…VALN), 505 to 582 (PRDV…QTAS), and 593 to 676 (PRRL…STLT). Cys-161 and Cys-219 form a disulfide bridge. Disulfide bonds link Cys-265-Cys-309 and Cys-353-Cys-396. N-linked (GlcNAc...) asparagine glycosylation is found at Asn-363, Asn-428, Asn-445, Asn-448, and Asn-479. Disulfide bonds link Cys-442–Cys-484 and Cys-529–Cys-571. Residues Asn-574 and Asn-634 are each glycosylated (N-linked (GlcNAc...) asparagine). Residues Cys-616 and Cys-659 are joined by a disulfide bond. Residues 688–708 (VAVGFGSCLAILILAICGLKL) traverse the membrane as a helical segment. Topologically, residues 709 to 847 (QRRWKRTQSQ…ENVDYVILKH (139 aa)) are cytoplasmic. Residues Ser-725, Ser-726, and Ser-729 each carry the phosphoserine modification. 2 short sequence motifs (ITIM motif) span residues 760-765 (ISYTTL) and 794-799 (VTYSVL). The residue at position 762 (Tyr-762) is a Phosphotyrosine. A phosphotyrosine mark is found at Tyr-807, Tyr-822, and Tyr-842. 2 consecutive short sequence motifs (ITIM motif) follow at residues 820–825 (IHYSEL) and 840–845 (VDYVIL).

This sequence belongs to the immunoglobulin superfamily. SIGLEC (sialic acid binding Ig-like lectin) family. As to quaternary structure, predominantly monomer of isoform CD22-beta. Also found as heterodimer of isoform CD22-beta and a shorter isoform. Interacts with PTPN6/SHP-1, LYN, SYK, PIK3R1/PIK3R2 and PLCG1 upon phosphorylation. Interacts with GRB2, INPP5D and SHC1 upon phosphorylation. May form a complex with INPP5D/SHIP, GRB2 and SHC1. Post-translationally, phosphorylation of Tyr-762, Tyr-807 and Tyr-822 are involved in binding to SYK, GRB2 and SYK, respectively. Phosphorylation of Tyr-842 is involved in binding to SYK, PLCG2 and PIK3R1/PIK3R2. In terms of processing, phosphorylated on tyrosine residues by LYN.

It is found in the cell membrane. In terms of biological role, most highly expressed siglec (sialic acid-binding immunoglobulin-like lectin) on B-cells that plays a role in various aspects of B-cell biology including differentiation, antigen presentation, and trafficking to bone marrow. Binds to alpha 2,6-linked sialic acid residues of surface molecules such as CD22 itself, CD45 and IgM in a cis configuration. Can also bind to ligands on other cells as an adhesion molecule in a trans configuration. Acts as an inhibitory coreceptor on the surface of B-cells and inhibits B-cell receptor induced signaling, characterized by inhibition of the calcium mobilization and cellular activation. Mechanistically, the immunoreceptor tyrosine-based inhibitory motif domain is phosphorylated by the Src kinase LYN, which in turn leads to the recruitment of the protein tyrosine phosphatase 1/PTPN6, leading to the negative regulation of BCR signaling. If this negative signaling from is of sufficient strength, apoptosis of the B-cell can be induced. This is B-cell receptor CD22 from Pan troglodytes (Chimpanzee).